The sequence spans 89 residues: Large ribosomal subunit protein eL34 (89 aa).

The protein belongs to the eukaryotic ribosomal protein eL34 family.

The protein is Large ribosomal subunit protein eL34 of Methanococcus maripaludis (strain C6 / ATCC BAA-1332).